Consider the following 261-residue polypeptide: MVRRSVTLPQLQAKKALGEPITMLTAWDYLWARLLDAAGVDVILVGDSLGMVALGYPTTLPVTLDQMIHHAQAVRRGVSHSFLVCDLPFLSYQESPEQALRSAGRLIKEAEVQAVKMEGASPVVQAATRRLVEAGIPVLGHVGLLPQRVHQLGGWRQQGNTPQDAAAILAGALALAEAGVFAVILEHIPAALAQQITAQLKIPTIGIGAGPHCDGQVLVTADVLGLSPQVPPFAKVYADLGTQAIAAIENYCQAVKSRQFP.

Residues Asp47 and Asp86 each contribute to the Mg(2+) site. Residues Asp47–Ser48, Asp86, and Lys116 contribute to the 3-methyl-2-oxobutanoate site. Glu118 is a binding site for Mg(2+). The Proton acceptor role is filled by Glu186.

The protein belongs to the PanB family. In terms of assembly, homodecamer; pentamer of dimers. Mg(2+) is required as a cofactor.

Its subcellular location is the cytoplasm. It carries out the reaction 3-methyl-2-oxobutanoate + (6R)-5,10-methylene-5,6,7,8-tetrahydrofolate + H2O = 2-dehydropantoate + (6S)-5,6,7,8-tetrahydrofolate. It participates in cofactor biosynthesis; (R)-pantothenate biosynthesis; (R)-pantoate from 3-methyl-2-oxobutanoate: step 1/2. In terms of biological role, catalyzes the reversible reaction in which hydroxymethyl group from 5,10-methylenetetrahydrofolate is transferred onto alpha-ketoisovalerate to form ketopantoate. This Thermosynechococcus vestitus (strain NIES-2133 / IAM M-273 / BP-1) protein is 3-methyl-2-oxobutanoate hydroxymethyltransferase.